The primary structure comprises 943 residues: Isoleucine--tRNA ligase (943 aa).

Residues 58-68 (PYANGKIHIGH) carry the 'HIGH' region motif. E567 lines the L-isoleucyl-5'-AMP pocket. Residues 608-612 (KMSKS) carry the 'KMSKS' region motif. An ATP-binding site is contributed by K611. Residues C906, C909, C926, and C929 each contribute to the Zn(2+) site.

The protein belongs to the class-I aminoacyl-tRNA synthetase family. IleS type 1 subfamily. In terms of assembly, monomer. Requires Zn(2+) as cofactor.

It localises to the cytoplasm. It catalyses the reaction tRNA(Ile) + L-isoleucine + ATP = L-isoleucyl-tRNA(Ile) + AMP + diphosphate. In terms of biological role, catalyzes the attachment of isoleucine to tRNA(Ile). As IleRS can inadvertently accommodate and process structurally similar amino acids such as valine, to avoid such errors it has two additional distinct tRNA(Ile)-dependent editing activities. One activity is designated as 'pretransfer' editing and involves the hydrolysis of activated Val-AMP. The other activity is designated 'posttransfer' editing and involves deacylation of mischarged Val-tRNA(Ile). The protein is Isoleucine--tRNA ligase of Pseudomonas putida (strain GB-1).